Reading from the N-terminus, the 309-residue chain is Porphobilinogen deaminase (309 aa).

Cys241 is subject to S-(dipyrrolylmethanemethyl)cysteine.

It belongs to the HMBS family. In terms of assembly, monomer. Dipyrromethane is required as a cofactor.

It carries out the reaction 4 porphobilinogen + H2O = hydroxymethylbilane + 4 NH4(+). The protein operates within porphyrin-containing compound metabolism; protoporphyrin-IX biosynthesis; coproporphyrinogen-III from 5-aminolevulinate: step 2/4. Functionally, tetrapolymerization of the monopyrrole PBG into the hydroxymethylbilane pre-uroporphyrinogen in several discrete steps. This Bacillus cereus (strain ZK / E33L) protein is Porphobilinogen deaminase.